The following is a 583-amino-acid chain: 15-cis-phytoene desaturase, chloroplastic/chromoplastic (583 aa).

The N-terminal 111 residues, 1 to 111 (MPQIGLVSAV…FRASPRPTKP (111 aa)), are a transit peptide targeting the chloroplast and chromoplast. FAD contacts are provided by residues 118 to 134 (GAGL…ADAG), 141 to 142 (EA), Lys149, 166 to 167 (HI), and Tyr172. Position 307 (Arg307) interacts with substrate. FAD-binding residues include Ile349 and Asp538. Ala546 lines the substrate pocket. Met548 contacts FAD.

The protein belongs to the carotenoid/retinoid oxidoreductase family. Homotetramer. It depends on FAD as a cofactor.

It is found in the plastid. The protein resides in the chloroplast. It localises to the chromoplast. The protein localises to the membrane. The enzyme catalyses 2 a plastoquinone + 15-cis-phytoene = 9,9',15-tri-cis-zeta-carotene + 2 a plastoquinol. Its pathway is carotenoid biosynthesis; lycopene biosynthesis. Converts phytoene into zeta-carotene via the intermediary of phytofluene by the symmetrical introduction of two double bonds at the C-11 and C-11' positions of phytoene with a concomitant isomerization of two neighboring double bonds at the C9 and C9' positions from trans to cis. This is 15-cis-phytoene desaturase, chloroplastic/chromoplastic (PDS) from Solanum lycopersicum (Tomato).